Here is a 317-residue protein sequence, read N- to C-terminus: Adenine deaminase (317 aa).

Residues histidine 14, histidine 16, and histidine 194 each contribute to the Zn(2+) site. Catalysis depends on glutamate 197, which acts as the Proton donor. Aspartate 275 provides a ligand contact to Zn(2+). Residue aspartate 276 participates in substrate binding.

Belongs to the metallo-dependent hydrolases superfamily. Adenosine and AMP deaminases family. Adenine deaminase type 2 subfamily. Zn(2+) is required as a cofactor.

The enzyme catalyses adenine + H2O + H(+) = hypoxanthine + NH4(+). Functionally, catalyzes the hydrolytic deamination of adenine to hypoxanthine. Plays an important role in the purine salvage pathway and in nitrogen catabolism. The polypeptide is Adenine deaminase (Pseudomonas syringae pv. syringae (strain B728a)).